The chain runs to 284 residues: MTSSQFDCQYCTSSLIGKKYVLKDDNLYCISCYDRIFSNYCEQCKEPIESDSKDLCYKNRHWHEGCFRCNKCHHSLVEKPFVAKDDRLLCTDCYSNECSSKCFHCKRTIMPGSRKMEFKGNYWHETCFVCEHCRQPIGTKPLISKESGNYCVPCFEKEFAHYCNFCKKVITSGGITFRDQIWHKECFLCSGCRKELYEEAFMSKDDFPFCLDCYNHLYAKKCAACTKPITGLRGAKFICFQDRQWHSECFNCGKCSVSLVGEGFLTHNMEILCRKCGSGADTDA.

Residues 8 to 32 (CQYCTSSLIGKKYVLKDDNLYCISC) form a C4-type zinc finger. LIM zinc-binding domains lie at 39–100 (NYCE…ECSS), 101–160 (KCFH…KEFA), and 161–220 (HYCN…LYAK).

In terms of assembly, interacts with CREM (via the third LIM domain). Interacts (via second LIM domain) with SPAG8. Testis-specific, temporal expression is coordinated with CREM.

The protein resides in the nucleus. Its function is as follows. May be involved in the regulation of spermatogenesis. Stimulates CREM transcriptional activity in a phosphorylation-independent manner. In Mus musculus (Mouse), this protein is Four and a half LIM domains protein 5 (Fhl5).